A 781-amino-acid chain; its full sequence is Chloride channel protein CLC-f (781 aa).

2 disordered regions span residues 1–41 (MSSG…QSPA) and 79–98 (RERHNPSSSSAFSAAGEEDG). Positions 10-20 (NEDRHLLRSTD) are enriched in basic and acidic residues. The next 12 helical transmembrane spans lie at 129 to 149 (WALLLIGCLIGVAAGICVAGF), 184 to 204 (ILLIPVTGGVIVGMMHGLLEI), 221 to 241 (FLAGIYPVIKAIQAAVTLGTG), 250 to 270 (SVDIGKSCANGFALMMENNRE), 279 to 299 (GAASGIASGFNAAVAGCFFAI), 314 to 334 (FTTAMIILASVISSTVSNALL), 350 to 370 (AAELPLYLILGMLCGAVSVVF), 388 to 408 (FGLPAIVCPALGGLGAGIIAL), 433 to 453 (APGIWLLAQLAAAKVVATALC), 457 to 477 (GLVGGLYAPSLMIGAAVGAVF), 502 to 522 (ALVGMAATLASMCSVPLTSVL), and 523 to 543 (LLFELTKDYRILLPLMGAVGL). The interval 553–584 (QGKESDSSEGRSTGRGYSSLSPSERKTEGVWR) is disordered. The segment covering 575–584 (SERKTEGVWR) has biased composition (basic and acidic residues). CBS domains lie at 621–677 (MSKN…NAST) and 699–763 (QERG…EMSR). Residues 726–746 (QLPVVKRGEVIHKGKRRKLLG) traverse the membrane as a helical segment.

Belongs to the chloride channel (TC 2.A.49) family. Homodimer.

It localises to the membrane. In terms of biological role, voltage-gated chloride channel. The chain is Chloride channel protein CLC-f (CLC-F) from Arabidopsis thaliana (Mouse-ear cress).